Reading from the N-terminus, the 139-residue chain is Small ribosomal subunit protein uS12 (139 aa).

Residues 118–139 (AGVANRNQSRSRYGTKKPKPKS) form a disordered region. Residues 130–139 (YGTKKPKPKS) show a composition bias toward basic residues.

Belongs to the universal ribosomal protein uS12 family. In terms of assembly, part of the 30S ribosomal subunit. Contacts proteins S8 and S17. May interact with IF1 in the 30S initiation complex.

Its function is as follows. With S4 and S5 plays an important role in translational accuracy. In terms of biological role, interacts with and stabilizes bases of the 16S rRNA that are involved in tRNA selection in the A site and with the mRNA backbone. Located at the interface of the 30S and 50S subunits, it traverses the body of the 30S subunit contacting proteins on the other side and probably holding the rRNA structure together. The combined cluster of proteins S8, S12 and S17 appears to hold together the shoulder and platform of the 30S subunit. This is Small ribosomal subunit protein uS12 from Mycoplasma mobile (strain ATCC 43663 / 163K / NCTC 11711) (Mesomycoplasma mobile).